Reading from the N-terminus, the 337-residue chain is Glucokinase (337 aa).

Residue 11 to 16 (ADIGGT) coordinates ATP.

Belongs to the bacterial glucokinase family.

The protein localises to the cytoplasm. The catalysed reaction is D-glucose + ATP = D-glucose 6-phosphate + ADP + H(+). In Xylella fastidiosa (strain M12), this protein is Glucokinase.